A 513-amino-acid polypeptide reads, in one-letter code: Probable mannosyl-oligosaccharide alpha-1,2-mannosidase 1B (513 aa).

Positions 1–21 (MHLSSLSLSLTALAIVSPSAA) are cleaved as a signal peptide. N-linked (GlcNAc...) asparagine glycans are attached at residues asparagine 97, asparagine 117, asparagine 184, asparagine 251, asparagine 322, asparagine 348, and asparagine 368. Cysteine 334 and cysteine 363 are disulfide-bonded. The active-site Proton donor is glutamate 377. Threonine 503 provides a ligand contact to Ca(2+).

Belongs to the glycosyl hydrolase 47 family. In terms of assembly, monomer. It depends on Ca(2+) as a cofactor. Mg(2+) serves as cofactor.

It localises to the cytoplasmic vesicle lumen. The catalysed reaction is N(4)-(alpha-D-Man-(1-&gt;2)-alpha-D-Man-(1-&gt;2)-alpha-D-Man-(1-&gt;3)-[alpha-D-Man-(1-&gt;2)-alpha-D-Man-(1-&gt;3)-[alpha-D-Man-(1-&gt;2)-alpha-D-Man-(1-&gt;6)]-alpha-D-Man-(1-&gt;6)]-beta-D-Man-(1-&gt;4)-beta-D-GlcNAc-(1-&gt;4)-beta-D-GlcNAc)-L-asparaginyl-[protein] (N-glucan mannose isomer 9A1,2,3B1,2,3) + 4 H2O = N(4)-(alpha-D-Man-(1-&gt;3)-[alpha-D-Man-(1-&gt;3)-[alpha-D-Man-(1-&gt;6)]-alpha-D-Man-(1-&gt;6)]-beta-D-Man-(1-&gt;4)-beta-D-GlcNAc-(1-&gt;4)-beta-D-GlcNAc)-L-asparaginyl-[protein] (N-glucan mannose isomer 5A1,2) + 4 beta-D-mannose. The enzyme catalyses N(4)-(alpha-D-Man-(1-&gt;2)-alpha-D-Man-(1-&gt;2)-alpha-D-Man-(1-&gt;3)-[alpha-D-Man-(1-&gt;3)-[alpha-D-Man-(1-&gt;2)-alpha-D-Man-(1-&gt;6)]-alpha-D-Man-(1-&gt;6)]-beta-D-Man-(1-&gt;4)-beta-D-GlcNAc-(1-&gt;4)-beta-D-GlcNAc)-L-asparaginyl-[protein] (N-glucan mannose isomer 8A1,2,3B1,3) + 3 H2O = N(4)-(alpha-D-Man-(1-&gt;3)-[alpha-D-Man-(1-&gt;3)-[alpha-D-Man-(1-&gt;6)]-alpha-D-Man-(1-&gt;6)]-beta-D-Man-(1-&gt;4)-beta-D-GlcNAc-(1-&gt;4)-beta-D-GlcNAc)-L-asparaginyl-[protein] (N-glucan mannose isomer 5A1,2) + 3 beta-D-mannose. Its pathway is protein modification; protein glycosylation. Involved in the maturation of Asn-linked oligosaccharides. Progressively trims alpha-1,2-linked mannose residues from Man(9)GlcNAc(2) to produce Man(5)GlcNAc(2). This chain is Probable mannosyl-oligosaccharide alpha-1,2-mannosidase 1B (mns1B), found in Aspergillus niger (strain ATCC MYA-4892 / CBS 513.88 / FGSC A1513).